A 99-amino-acid chain; its full sequence is A-type ATP synthase subunit F (99 aa).

The protein belongs to the V-ATPase F subunit family. In terms of assembly, has multiple subunits with at least A(3), B(3), C, D, E, F, H, I and proteolipid K(x).

The protein localises to the cell membrane. Component of the A-type ATP synthase that produces ATP from ADP in the presence of a proton gradient across the membrane. This Methanococcoides burtonii (strain DSM 6242 / NBRC 107633 / OCM 468 / ACE-M) protein is A-type ATP synthase subunit F.